Reading from the N-terminus, the 457-residue chain is UDP-N-acetyl-alpha-D-muramoyl-L-alanyl-L-glutamate epimerase (457 aa).

This sequence belongs to the MurL family.

The catalysed reaction is UDP-N-acetyl-alpha-D-muramoyl-L-alanyl-L-glutamate + ATP + H2O = UDP-N-acetyl-alpha-D-muramoyl-L-alanyl-D-glutamate + AMP + diphosphate + H(+). The protein operates within cell wall biogenesis; peptidoglycan biosynthesis. In terms of biological role, cell wall formation. Catalyzes epimerization of the terminal L-glutamate in UDP-N-acetyl-alpha-D-muramoyl-L-alanyl-L-glutamate. The sequence is that of UDP-N-acetyl-alpha-D-muramoyl-L-alanyl-L-glutamate epimerase from Salinispora tropica (strain ATCC BAA-916 / DSM 44818 / JCM 13857 / NBRC 105044 / CNB-440).